Here is a 326-residue protein sequence, read N- to C-terminus: Hairy/enhancer-of-split related with YRPW motif-like protein (326 aa).

Positions M1–R56 are disordered. Positions Q42–A111 are transcriptional repression and interaction with NCOR1 and SIN3A. Residues A43 to L98 form the bHLH domain. The Orange domain occupies F116 to L153. 2 disordered regions span residues H223–T260 and P272–R306. The segment covering S292 to G305 has biased composition (low complexity).

This sequence belongs to the HEY family. Interacts with HES1, HDAC1, NCOR1 and SIN3A. Self-associates. Interacts with GATA4, GATA6, HEY1 and HEY2. Expressed in heart and at lower levels in brain, lung, muscle, ovary and testis.

The protein resides in the nucleus. Functionally, transcriptional repressor which binds preferentially to the canonical E box sequence 5'-CACGTG-3'. Downstream effector of Notch signaling required for cardiovascular development. Specifically required for the Notch-induced endocardial epithelial to mesenchymal transition, which is itself criticial for cardiac valve and septum development. Represses transcription by the cardiac transcriptional activators GATA4 and GATA6. The sequence is that of Hairy/enhancer-of-split related with YRPW motif-like protein (Heyl) from Mus musculus (Mouse).